The sequence spans 328 residues: Beta-ketoacyl-[acyl-carrier-protein] synthase III (328 aa).

Residues Cys122 and His255 contribute to the active site. The segment at Gln256 to Arg260 is ACP-binding. Asn285 is a catalytic residue.

It belongs to the thiolase-like superfamily. FabH family. In terms of assembly, homodimer.

The protein resides in the cytoplasm. It catalyses the reaction malonyl-[ACP] + acetyl-CoA + H(+) = 3-oxobutanoyl-[ACP] + CO2 + CoA. The protein operates within lipid metabolism; fatty acid biosynthesis. Catalyzes the condensation reaction of fatty acid synthesis by the addition to an acyl acceptor of two carbons from malonyl-ACP. Catalyzes the first condensation reaction which initiates fatty acid synthesis and may therefore play a role in governing the total rate of fatty acid production. Possesses both acetoacetyl-ACP synthase and acetyl transacylase activities. Its substrate specificity determines the biosynthesis of branched-chain and/or straight-chain of fatty acids. The sequence is that of Beta-ketoacyl-[acyl-carrier-protein] synthase III from Polynucleobacter asymbioticus (strain DSM 18221 / CIP 109841 / QLW-P1DMWA-1) (Polynucleobacter necessarius subsp. asymbioticus).